Reading from the N-terminus, the 1563-residue chain is DNA-directed RNA polymerase subunit beta' (1563 aa).

Cys61, Cys63, Cys76, and Cys79 together coordinate Zn(2+). 3 residues coordinate Mg(2+): Asp588, Asp590, and Asp592. Zn(2+) is bound by residues Cys925, Cys999, Cys1006, and Cys1009.

This sequence belongs to the RNA polymerase beta' chain family. The RNAP catalytic core consists of 2 alpha, 1 beta, 1 beta' and 1 omega subunit. When a sigma factor is associated with the core the holoenzyme is formed, which can initiate transcription. Mg(2+) is required as a cofactor. It depends on Zn(2+) as a cofactor.

The catalysed reaction is RNA(n) + a ribonucleoside 5'-triphosphate = RNA(n+1) + diphosphate. Functionally, DNA-dependent RNA polymerase catalyzes the transcription of DNA into RNA using the four ribonucleoside triphosphates as substrates. The polypeptide is DNA-directed RNA polymerase subunit beta' (Hydrogenobaculum sp. (strain Y04AAS1)).